Consider the following 388-residue polypeptide: GTPase Obg (388 aa).

The Obg domain maps to 1–159 (MKFVDEAVIR…RSLKLELLLL (159 aa)). An OBG-type G domain is found at 160–333 (ADVGLLGMPN…LATKLLDFIQ (174 aa)). GTP is bound by residues 166–173 (GMPNAGKS), 191–195 (FTTLV), 213–216 (DIPG), 283–286 (NKAD), and 314–316 (SAY). Residues serine 173 and threonine 193 each contribute to the Mg(2+) site.

It belongs to the TRAFAC class OBG-HflX-like GTPase superfamily. OBG GTPase family. In terms of assembly, monomer. Mg(2+) serves as cofactor.

It is found in the cytoplasm. Its function is as follows. An essential GTPase which binds GTP, GDP and possibly (p)ppGpp with moderate affinity, with high nucleotide exchange rates and a fairly low GTP hydrolysis rate. Plays a role in control of the cell cycle, stress response, ribosome biogenesis and in those bacteria that undergo differentiation, in morphogenesis control. The sequence is that of GTPase Obg from Shewanella sp. (strain MR-4).